A 237-amino-acid polypeptide reads, in one-letter code: Ribosomal RNA small subunit methyltransferase G (237 aa).

Residues G78, F83, 129–130 (AE), and R148 contribute to the S-adenosyl-L-methionine site.

Belongs to the methyltransferase superfamily. RNA methyltransferase RsmG family.

It is found in the cytoplasm. Its function is as follows. Specifically methylates the N7 position of a guanine in 16S rRNA. This chain is Ribosomal RNA small subunit methyltransferase G, found in Streptococcus pyogenes serotype M6 (strain ATCC BAA-946 / MGAS10394).